The sequence spans 215 residues: Cytochrome b6 (215 aa).

Residues 32 to 52 (IFYCFGGIVFTCFLVQVATGF) traverse the membrane as a helical segment. Cys35 serves as a coordination point for heme c. His86 and His100 together coordinate heme b. Helical transmembrane passes span 90-110 (ASMMVMMMVLHVFRVYLTGGF), 116-136 (LTWVTGVILAVVTVSFGVTGY), and 186-206 (AHTFVLPLAAAVLMLTHFLMI). Heme b-binding residues include His187 and His202.

The protein belongs to the cytochrome b family. PetB subfamily. As to quaternary structure, the 4 large subunits of the cytochrome b6-f complex are cytochrome b6, subunit IV (17 kDa polypeptide, PetD), cytochrome f and the Rieske protein, while the 4 small subunits are PetG, PetL, PetM and PetN. The complex functions as a dimer. The cofactor is heme b. It depends on heme c as a cofactor.

It localises to the plastid. The protein localises to the chloroplast thylakoid membrane. Its function is as follows. Component of the cytochrome b6-f complex, which mediates electron transfer between photosystem II (PSII) and photosystem I (PSI), cyclic electron flow around PSI, and state transitions. The sequence is that of Cytochrome b6 from Trieres chinensis (Marine centric diatom).